Reading from the N-terminus, the 460-residue chain is Carboxypeptidase DacB (460 aa).

The signal sequence occupies residues 1 to 28; it reads MRPTRWRRSTHVAVGVAVLALVVAVVAA. Residues 39 to 64 are disordered; that stretch reads AAEAVPPAPPPATADPGVVPVDLSAP. Ser-113 acts as the Acyl-ester intermediate in catalysis. Residue Lys-116 is the Proton acceptor of the active site. Ser-294 is a catalytic residue.

Belongs to the peptidase S13 family.

In terms of biological role, carboxypeptidase that cleaves terminal D-alanine from peptidoglycan in the mycobacterial cell wall. May cleave L-Lys-D-Ala and/or D-Ala-D-Ala peptide bonds. Exerts important effects on mycobacterial cell morphology and cell division. The polypeptide is Carboxypeptidase DacB (Mycolicibacterium smegmatis (strain ATCC 700084 / mc(2)155) (Mycobacterium smegmatis)).